Here is a 240-residue protein sequence, read N- to C-terminus: 7-cyano-7-deazaguanine synthase (240 aa).

Residue 18-28 (FSGGQDSTTCL) participates in ATP binding. Residues cysteine 197, cysteine 206, cysteine 209, and cysteine 212 each contribute to the Zn(2+) site.

This sequence belongs to the QueC family. Zn(2+) serves as cofactor.

It carries out the reaction 7-carboxy-7-deazaguanine + NH4(+) + ATP = 7-cyano-7-deazaguanine + ADP + phosphate + H2O + H(+). Its pathway is purine metabolism; 7-cyano-7-deazaguanine biosynthesis. Its function is as follows. Catalyzes the ATP-dependent conversion of 7-carboxy-7-deazaguanine (CDG) to 7-cyano-7-deazaguanine (preQ(0)). The sequence is that of 7-cyano-7-deazaguanine synthase from Shewanella putrefaciens (strain CN-32 / ATCC BAA-453).